The sequence spans 259 residues: Small ribosomal subunit protein uS7m (259 aa).

Residues 1–39 constitute a mitochondrion transit peptide; that stretch reads MLRLIKQPLFRCASSGHLMKESLVFIHQTRTFQVGKFTS. T157 carries the phosphothreonine modification.

This sequence belongs to the universal ribosomal protein uS7 family. As to quaternary structure, component of the mitochondrial small ribosomal subunit (mt-SSU). Mature yeast 74S mitochondrial ribosomes consist of a small (37S) and a large (54S) subunit. The 37S small subunit contains a 15S ribosomal RNA (15S mt-rRNA) and at least 32 different proteins. The 54S large subunit contains a 21S rRNA (21S mt-rRNA) and at least 45 different proteins.

Its subcellular location is the mitochondrion. Component of the mitochondrial ribosome (mitoribosome), a dedicated translation machinery responsible for the synthesis of mitochondrial genome-encoded proteins, including at least some of the essential transmembrane subunits of the mitochondrial respiratory chain. The mitoribosomes are attached to the mitochondrial inner membrane and translation products are cotranslationally integrated into the membrane. The polypeptide is Small ribosomal subunit protein uS7m (rsm7) (Schizosaccharomyces pombe (strain 972 / ATCC 24843) (Fission yeast)).